Here is a 102-residue protein sequence, read N- to C-terminus: Small ribosomal subunit protein uS17 (102 aa).

The segment covering 1–15 (MTDETASQEASQSTD) has biased composition (polar residues). The tract at residues 1–20 (MTDETASQEASQSTDAAAPA) is disordered.

It belongs to the universal ribosomal protein uS17 family. As to quaternary structure, part of the 30S ribosomal subunit.

One of the primary rRNA binding proteins, it binds specifically to the 5'-end of 16S ribosomal RNA. This is Small ribosomal subunit protein uS17 from Frankia casuarinae (strain DSM 45818 / CECT 9043 / HFP020203 / CcI3).